A 101-amino-acid polypeptide reads, in one-letter code: Small ribosomal subunit protein uS14 (101 aa).

Belongs to the universal ribosomal protein uS14 family. As to quaternary structure, part of the 30S ribosomal subunit. Contacts proteins S3 and S10.

In terms of biological role, binds 16S rRNA, required for the assembly of 30S particles and may also be responsible for determining the conformation of the 16S rRNA at the A site. The protein is Small ribosomal subunit protein uS14 of Ralstonia pickettii (strain 12J).